The following is a 176-amino-acid chain: Peptide methionine sulfoxide reductase MsrA (176 aa).

C10 is an active-site residue.

Belongs to the MsrA Met sulfoxide reductase family.

It carries out the reaction L-methionyl-[protein] + [thioredoxin]-disulfide + H2O = L-methionyl-(S)-S-oxide-[protein] + [thioredoxin]-dithiol. The catalysed reaction is [thioredoxin]-disulfide + L-methionine + H2O = L-methionine (S)-S-oxide + [thioredoxin]-dithiol. Its function is as follows. Has an important function as a repair enzyme for proteins that have been inactivated by oxidation. Catalyzes the reversible oxidation-reduction of methionine sulfoxide in proteins to methionine. In Leptospira borgpetersenii serovar Hardjo-bovis (strain JB197), this protein is Peptide methionine sulfoxide reductase MsrA.